The chain runs to 163 residues: Large ribosomal subunit protein uL10 (163 aa).

The protein belongs to the universal ribosomal protein uL10 family. Part of the ribosomal stalk of the 50S ribosomal subunit. The N-terminus interacts with L11 and the large rRNA to form the base of the stalk. The C-terminus forms an elongated spine to which L12 dimers bind in a sequential fashion forming a multimeric L10(L12)X complex.

Its function is as follows. Forms part of the ribosomal stalk, playing a central role in the interaction of the ribosome with GTP-bound translation factors. The polypeptide is Large ribosomal subunit protein uL10 (Actinobacillus succinogenes (strain ATCC 55618 / DSM 22257 / CCUG 43843 / 130Z)).